We begin with the raw amino-acid sequence, 433 residues long: 3-phosphoshikimate 1-carboxyvinyltransferase (433 aa).

Positions 23, 24, and 28 each coordinate 3-phosphoshikimate. K23 contacts phosphoenolpyruvate. Residues G95 and R123 each contribute to the phosphoenolpyruvate site. 3-phosphoshikimate-binding residues include S170, S171, Q172, S198, D317, and K344. Q172 is a phosphoenolpyruvate binding site. Residue D317 is the Proton acceptor of the active site. R348, R391, and K416 together coordinate phosphoenolpyruvate.

This sequence belongs to the EPSP synthase family. In terms of assembly, monomer.

The protein localises to the cytoplasm. It catalyses the reaction 3-phosphoshikimate + phosphoenolpyruvate = 5-O-(1-carboxyvinyl)-3-phosphoshikimate + phosphate. It participates in metabolic intermediate biosynthesis; chorismate biosynthesis; chorismate from D-erythrose 4-phosphate and phosphoenolpyruvate: step 6/7. In terms of biological role, catalyzes the transfer of the enolpyruvyl moiety of phosphoenolpyruvate (PEP) to the 5-hydroxyl of shikimate-3-phosphate (S3P) to produce enolpyruvyl shikimate-3-phosphate and inorganic phosphate. The polypeptide is 3-phosphoshikimate 1-carboxyvinyltransferase (Neisseria gonorrhoeae (strain NCCP11945)).